Here is a 410-residue protein sequence, read N- to C-terminus: Sulfate adenylyltransferase (410 aa).

The protein belongs to the sulfate adenylyltransferase family.

It carries out the reaction sulfate + ATP + H(+) = adenosine 5'-phosphosulfate + diphosphate. It functions in the pathway sulfur metabolism; hydrogen sulfide biosynthesis; sulfite from sulfate: step 1/3. The sequence is that of Sulfate adenylyltransferase from Syntrophobacter fumaroxidans (strain DSM 10017 / MPOB).